Reading from the N-terminus, the 663-residue chain is Transmembrane 9 superfamily member 2 (663 aa).

An N-terminal signal peptide occupies residues 1–28 (MSARLPVLSPPRWPRLLLLSLLLLGAVP). Over 29–300 (GPRRSGAFYL…LESMPHTHIQ (272 aa)) the chain is Lumenal. Residues 301-321 (WFSIMNSLVIVLFLSGMVAMI) traverse the membrane as a helical segment. At 322–374 (MLRTLHKDIARYNQMDSTEDAQEEFGWKLVHGDIFRPPRKGMLLSVFLGSGTQ) the chain is on the cytoplasmic side. The chain crosses the membrane as a helical span at residues 375-395 (ILIMTFVTLFFACLGFLSPAN). Topologically, residues 396 to 398 (RGA) are lumenal. A helical transmembrane segment spans residues 399-419 (LMTCAVVLWVLLGTPAGYVAA). Over 420-437 (RFYKSFGGEKWKTNVLLT) the chain is Cytoplasmic. A helical membrane pass occupies residues 438 to 458 (SFLCPGIVFADFFIMNLILWG). Over 459–466 (EGSSAAIP) the chain is Lumenal. Residues 467–487 (FGTLVAILALWFCISVPLTFI) traverse the membrane as a helical segment. Topologically, residues 488–522 (GAYFGFKKNAIEHPVRTNQIPRQIPEQSFYTKPLP) are cytoplasmic. The helical transmembrane segment at 523–543 (GIIMGGILPFGCIFIQLFFIL) threads the bilayer. Topologically, residues 544–554 (NSIWSHQMYYM) are lumenal. Residues 555-575 (FGFLFLVFIILVITCSEATIL) traverse the membrane as a helical segment. Over 576–591 (LCYFHLCAEDYHWQWR) the chain is Cytoplasmic. A helical transmembrane segment spans residues 592–612 (SFLTSGFTAVYFLIYAVHYFF). Topologically, residues 613–631 (SKLQITGTASTILYFGYTM) are lumenal. Residues 632-652 (IMVLIFFLFTGTIGFFACFWF) traverse the membrane as a helical segment. At 653–663 (VTKIYSVVKVD) the chain is on the cytoplasmic side.

It belongs to the nonaspanin (TM9SF) (TC 9.A.2) family. In terms of tissue distribution, ubiquitously expressed. Especially abundant in pancreas, highly expressed in kidney, lower levels in heart, brain, skeletal muscle and placenta. Lowest expression in lung and liver.

It is found in the endosome membrane. The protein localises to the golgi outpost. The protein resides in the cytoplasm. Its subcellular location is the cytoskeleton. It localises to the microtubule organizing center. In the intracellular compartments, may function as a channel or small molecule transporter. This chain is Transmembrane 9 superfamily member 2 (TM9SF2), found in Homo sapiens (Human).